Consider the following 350-residue polypeptide: tRNA uridine(34) hydroxylase (350 aa).

Positions 146 to 240 (DDPDALFIDM…YARKAREQGL (95 aa)) constitute a Rhodanese domain. Cys200 (cysteine persulfide intermediate) is an active-site residue.

It belongs to the TrhO family.

The enzyme catalyses uridine(34) in tRNA + AH2 + O2 = 5-hydroxyuridine(34) in tRNA + A + H2O. Catalyzes oxygen-dependent 5-hydroxyuridine (ho5U) modification at position 34 in tRNAs. This chain is tRNA uridine(34) hydroxylase, found in Shigella flexneri serotype 5b (strain 8401).